The primary structure comprises 189 residues: Pyridoxal 5'-phosphate synthase subunit PdxT (189 aa).

47 to 49 (GES) is a binding site for L-glutamine. Cysteine 79 acts as the Nucleophile in catalysis. Residues arginine 105 and 132 to 133 (IR) contribute to the L-glutamine site. Active-site charge relay system residues include histidine 168 and glutamate 170.

It belongs to the glutaminase PdxT/SNO family. As to quaternary structure, in the presence of PdxS, forms a dodecamer of heterodimers. Only shows activity in the heterodimer.

It carries out the reaction aldehydo-D-ribose 5-phosphate + D-glyceraldehyde 3-phosphate + L-glutamine = pyridoxal 5'-phosphate + L-glutamate + phosphate + 3 H2O + H(+). The catalysed reaction is L-glutamine + H2O = L-glutamate + NH4(+). Its pathway is cofactor biosynthesis; pyridoxal 5'-phosphate biosynthesis. Catalyzes the hydrolysis of glutamine to glutamate and ammonia as part of the biosynthesis of pyridoxal 5'-phosphate. The resulting ammonia molecule is channeled to the active site of PdxS. This is Pyridoxal 5'-phosphate synthase subunit PdxT from Methanocorpusculum labreanum (strain ATCC 43576 / DSM 4855 / Z).